The sequence spans 517 residues: Protein disulfide-isomerase A5 (517 aa).

Residues 1 to 21 (MARAWGLLLAIGVVLPTWLSS) form the signal peptide. 4 disulfide bridges follow: Cys-83/Cys-92, Cys-180/Cys-183, Cys-303/Cys-306, and Cys-424/Cys-427. Thioredoxin domains follow at residues 132 to 259 (FLKD…NPLP), 268 to 382 (PWAD…NPEA), and 376 to 504 (WMQN…TLRE). The short motif at 514–517 (REEL) is the Prevents secretion from ER element.

This sequence belongs to the protein disulfide isomerase family. Interacts with CALR (via P-domain).

Its subcellular location is the endoplasmic reticulum lumen. The enzyme catalyses Catalyzes the rearrangement of -S-S- bonds in proteins.. The sequence is that of Protein disulfide-isomerase A5 (Pdia5) from Mus musculus (Mouse).